Reading from the N-terminus, the 264-residue chain is E3 ubiquitin-protein ligase MARCHF8 (264 aa).

Residues 15–47 (LGHSVSRSSNISKAGSPTSVSAPSRFPRTSVTP) form a disordered region. Over residues 16–47 (GHSVSRSSNISKAGSPTSVSAPSRFPRTSVTP) the composition is skewed to polar residues. The RING-CH-type zinc-finger motif lies at 45–106 (VTPSSQDICR…ELCKFEFIME (62 aa)). Zn(2+)-binding residues include Cys-53, Cys-56, Cys-70, Cys-72, His-80, Cys-83, Cys-96, and Cys-99. The next 2 membrane-spanning stretches (helical) occupy residues 130–150 (CSVT…YVLI) and 170–190 (FWTK…FMYV).

The protein resides in the cytoplasmic vesicle membrane. Its subcellular location is the lysosome membrane. It localises to the early endosome membrane. It carries out the reaction S-ubiquitinyl-[E2 ubiquitin-conjugating enzyme]-L-cysteine + [acceptor protein]-L-lysine = [E2 ubiquitin-conjugating enzyme]-L-cysteine + N(6)-ubiquitinyl-[acceptor protein]-L-lysine.. It functions in the pathway protein modification; protein ubiquitination. In terms of biological role, E3 ubiquitin-protein ligase that mediates ubiquitination of cd86 and MHC class II proteins, such as hla-dr alpha and beta, and promotes their subsequent endocytosis and sorting to lysosomes via multivesicular bodies. This is E3 ubiquitin-protein ligase MARCHF8 (marchf8) from Xenopus laevis (African clawed frog).